A 241-amino-acid polypeptide reads, in one-letter code: Large ribosomal subunit protein uL2 (241 aa).

Positions 201–241 are disordered; it reads VDHPHGGGNRQHPGRPTTVSRHAPPGRKVGSIAAKRTGLKR.

Belongs to the universal ribosomal protein uL2 family. Part of the 50S ribosomal subunit. Forms a bridge to the 30S subunit in the 70S ribosome.

In terms of biological role, one of the primary rRNA binding proteins. Required for association of the 30S and 50S subunits to form the 70S ribosome, for tRNA binding and peptide bond formation. It has been suggested to have peptidyltransferase activity; this is somewhat controversial. Makes several contacts with the 16S rRNA in the 70S ribosome. The chain is Large ribosomal subunit protein uL2 from Methanobrevibacter smithii (strain ATCC 35061 / DSM 861 / OCM 144 / PS).